The sequence spans 92 residues: Acylphosphatase (92 aa).

One can recognise an Acylphosphatase-like domain in the interval 5-90; the sequence is TYRLVICGLV…GDFVGFQLRE (86 aa). Residues Arg20 and Asn38 contribute to the active site.

It belongs to the acylphosphatase family.

It catalyses the reaction an acyl phosphate + H2O = a carboxylate + phosphate + H(+). The sequence is that of Acylphosphatase (acyP) from Albidiferax ferrireducens (strain ATCC BAA-621 / DSM 15236 / T118) (Rhodoferax ferrireducens).